Reading from the N-terminus, the 276-residue chain is Large ribosomal subunit protein uL2 (276 aa).

The disordered stretch occupies residues 224–276 (VMNPVDHPHGGGEGKAPIGRKSPMTPWGKPTLGYKTRKKKNKSDKFIIRRRKK). The segment covering 258–276 (KTRKKKNKSDKFIIRRRKK) has biased composition (basic residues).

This sequence belongs to the universal ribosomal protein uL2 family. As to quaternary structure, part of the 50S ribosomal subunit. Forms a bridge to the 30S subunit in the 70S ribosome.

In terms of biological role, one of the primary rRNA binding proteins. Required for association of the 30S and 50S subunits to form the 70S ribosome, for tRNA binding and peptide bond formation. It has been suggested to have peptidyltransferase activity; this is somewhat controversial. Makes several contacts with the 16S rRNA in the 70S ribosome. The polypeptide is Large ribosomal subunit protein uL2 (Geobacillus kaustophilus (strain HTA426)).